We begin with the raw amino-acid sequence, 123 residues long: MIQERTILNVADNSGARFAMCIKVLGGSKRRYANIGDVIKVTVKEAIPKAKVKKGDVLQAVIVRTKKGIRRIDGSIIRFDNNACVLLNDTNMQPLGTRIFGPVTRELRYANFVRIISLAPEVL.

It belongs to the universal ribosomal protein uL14 family. Part of the 50S ribosomal subunit. Forms a cluster with proteins L3 and L19. In the 70S ribosome, L14 and L19 interact and together make contacts with the 16S rRNA in bridges B5 and B8.

Binds to 23S rRNA. Forms part of two intersubunit bridges in the 70S ribosome. The protein is Large ribosomal subunit protein uL14 of Blochmanniella floridana.